A 367-amino-acid polypeptide reads, in one-letter code: Methylthioribose-1-phosphate isomerase (367 aa).

Residues 54-56 (RGA), R91, and Q201 each bind substrate. D242 serves as the catalytic Proton donor. 252-253 (NK) contributes to the substrate binding site.

This sequence belongs to the eIF-2B alpha/beta/delta subunits family. MtnA subfamily.

It catalyses the reaction 5-(methylsulfanyl)-alpha-D-ribose 1-phosphate = 5-(methylsulfanyl)-D-ribulose 1-phosphate. The protein operates within amino-acid biosynthesis; L-methionine biosynthesis via salvage pathway; L-methionine from S-methyl-5-thio-alpha-D-ribose 1-phosphate: step 1/6. Functionally, catalyzes the interconversion of methylthioribose-1-phosphate (MTR-1-P) into methylthioribulose-1-phosphate (MTRu-1-P). The protein is Methylthioribose-1-phosphate isomerase of Acidiphilium cryptum (strain JF-5).